The following is a 412-amino-acid chain: Putative competence-damage inducible protein (412 aa).

The protein belongs to the CinA family.

The chain is Putative competence-damage inducible protein from Bacillus cereus (strain Q1).